Consider the following 271-residue polypeptide: Putative mitochondrial carrier protein PET8 (271 aa).

Solcar repeat units follow at residues 3–76 (STFL…MKQQ), 91–177 (AEVL…LKKK), and 187–270 (VSAW…VHSL). 6 helical membrane passes run 6–26 (LASL…FFPI), 51–71 (GLGS…VTYD), 97–117 (MLSS…AEVI), 152–168 (GWWT…CIQF), 193–213 (AVCG…LDVL), and 251–271 (MWIS…HSLF).

Belongs to the mitochondrial carrier (TC 2.A.29) family.

The protein resides in the mitochondrion inner membrane. This Eremothecium gossypii (strain ATCC 10895 / CBS 109.51 / FGSC 9923 / NRRL Y-1056) (Yeast) protein is Putative mitochondrial carrier protein PET8 (PET8).